We begin with the raw amino-acid sequence, 145 residues long: Aminoglycoside N(6')-acetyltransferase type 1 (145 aa).

Positions 1–145 constitute an N-acetyltransferase domain; sequence MNIKPASEAS…KVVYFSKKID (145 aa). The substrate site is built by tryptophan 22, tyrosine 65, and glutamate 78. 80–82 is a binding site for acetyl-CoA; it reads IYV. Aspartate 114 contacts substrate. Asparagine 119 is a binding site for acetyl-CoA. Glutamate 135 contacts substrate.

As to quaternary structure, homodimer.

It carries out the reaction kanamycin B + acetyl-CoA = N(6')-acetylkanamycin B + CoA + H(+). Catalyzes the transfer of an acetyl group from acetyl-CoA to the 6'-amino group of aminoglycoside molecules conferring resistance to antibiotics containing the purpurosamine ring including amikacin, kanamycin, tobramycin and netilmicin. This chain is Aminoglycoside N(6')-acetyltransferase type 1, found in Acinetobacter haemolyticus.